The chain runs to 2167 residues: RNA editing associated helicase 2 (2167 aa).

The transit peptide at 1–30 (MRAIRLTVACRYLGPFRSVTLSPVVLPVRL) directs the protein to the mitochondrion. 2 disordered regions span residues 503-593 (RARG…DEAT) and 937-969 (ENAT…PTNV). The segment covering 532-541 (SSTQTPSSST) has biased composition (low complexity). A DRBM domain is found at 1024–1095 (DAKTVLQRYC…AMHALALLRR (72 aa)). Positions 1348 to 1513 (LRAISSNQIV…FGNAPIINVE (166 aa)) constitute a Helicase ATP-binding domain. 1361 to 1368 (GTTGCGKT) contributes to the ATP binding site. Positions 1366–1367 (GK) match the Important for binding to gRNA motif. The short motif at 1460–1463 (DEIH) is the DEAH box element. Positions 1585–1762 (AIDHAVRSLD…SLCLQILALD (178 aa)) constitute a Helicase C-terminal domain. The interval 2132–2167 (IIEPCTEPKGGSSEAEKTHVNSSHTPTTSAEAGGDS) is disordered. Residues 2151–2161 (VNSSHTPTTSA) show a composition bias toward polar residues.

This sequence belongs to the DEAD box helicase family. DEAH subfamily. As to quaternary structure, component of the REH2-associated complex (REH2C) composed of helicase REH2, associated factors H2F1 and H2F2, and mRNAs at various editing stages; the formation of the complex is RNA-independent. Within the complex, interacts with H2F1; the interaction is direct. Interacts transiently, in a RNA-dependent manner, with various editing complexes including the RNA editing core (RECC) complex, the gRNA-binding (GRBC) complex (also known as the MRB1 complex) and the RNA editing mediator (REMC) complex. Interacts with GAP1/GRBC2 via RNA forming a variant of the GRBC complex known as REH2-GRBC complex. Interacts with mitochondrial ribosomes.

It is found in the mitochondrion. The enzyme catalyses ATP + H2O = ADP + phosphate + H(+). ATP-dependent RNA helicase that unwinds RNA in a 3' to 5' direction and that plays an important role in mitochondrial mRNA editing, a process involving the addition and deletion of uridine (U) nucleotides in the pre-mRNA. As part of the RET2-containing gRNA-binding (RET2-GRBC) complex, acts as a scaffold for the assembly of mRNA-gRNA hybrids and the recruitment of the RNA editing core (RECC) complex. Regulates several steps of mRNA editing by the MRBC3010/GRBC6 containing gRNA-binding (MRBC3010-GRBC) complex including loading of unedited mRNA, editing in the first sequence block and subsequent editing progression across multiple sequence blocks. Also, regulates the RNA substrate content of the MRBC3010-GRBC complex as well as the association of this complex with mitoribosomes. The protein is RNA editing associated helicase 2 of Trypanosoma brucei brucei (strain 927/4 GUTat10.1).